A 368-amino-acid polypeptide reads, in one-letter code: tRNA/tmRNA (uracil-C(5))-methyltransferase (368 aa).

S-adenosyl-L-methionine contacts are provided by Q192, Y220, N225, E241, and D301. C326 functions as the Nucleophile in the catalytic mechanism. Residue E360 is the Proton acceptor of the active site.

This sequence belongs to the class I-like SAM-binding methyltransferase superfamily. RNA M5U methyltransferase family. TrmA subfamily.

It catalyses the reaction uridine(54) in tRNA + S-adenosyl-L-methionine = 5-methyluridine(54) in tRNA + S-adenosyl-L-homocysteine + H(+). The catalysed reaction is uridine(341) in tmRNA + S-adenosyl-L-methionine = 5-methyluridine(341) in tmRNA + S-adenosyl-L-homocysteine + H(+). Its function is as follows. Dual-specificity methyltransferase that catalyzes the formation of 5-methyluridine at position 54 (m5U54) in all tRNAs, and that of position 341 (m5U341) in tmRNA (transfer-mRNA). In Actinobacillus pleuropneumoniae serotype 3 (strain JL03), this protein is tRNA/tmRNA (uracil-C(5))-methyltransferase.